The chain runs to 358 residues: 3-dehydroquinate synthase (358 aa).

Residues 69–74 (DGEAHK), 103–107 (GVIGD), 127–128 (TT), lysine 140, lysine 149, and 167–170 (CLRT) contribute to the NAD(+) site. Positions 182, 245, and 262 each coordinate Zn(2+).

This sequence belongs to the sugar phosphate cyclases superfamily. Dehydroquinate synthase family. Requires Co(2+) as cofactor. The cofactor is Zn(2+). It depends on NAD(+) as a cofactor.

It is found in the cytoplasm. It carries out the reaction 7-phospho-2-dehydro-3-deoxy-D-arabino-heptonate = 3-dehydroquinate + phosphate. The protein operates within metabolic intermediate biosynthesis; chorismate biosynthesis; chorismate from D-erythrose 4-phosphate and phosphoenolpyruvate: step 2/7. Functionally, catalyzes the conversion of 3-deoxy-D-arabino-heptulosonate 7-phosphate (DAHP) to dehydroquinate (DHQ). The sequence is that of 3-dehydroquinate synthase from Tolumonas auensis (strain DSM 9187 / NBRC 110442 / TA 4).